The following is a 398-amino-acid chain: Lysophosphatidylserine lipase ABHD12 (398 aa).

Residues 1-74 (MRKRTEPVAL…RKGLWLRLRK (74 aa)) are Cytoplasmic-facing. Residues 75-95 (ILFCVLGLYIAIPFLIKLCPG) form a helical membrane-spanning segment. Topologically, residues 96-398 (IQAKLIFLNF…LGKSEPEHQH (303 aa)) are extracellular. Residue Asn-123 is glycosylated (N-linked (GlcNAc...) asparagine). Residue Ser-246 is the Nucleophile of the active site. Residues Asp-333 and His-372 each act as charge relay system in the active site.

The protein belongs to the serine esterase family.

It is found in the endoplasmic reticulum membrane. It catalyses the reaction 1-(9Z-octadecenoyl)-sn-glycero-3-phospho-L-serine + H2O = sn-glycero-3-phospho-L-serine + (9Z)-octadecenoate + H(+). The catalysed reaction is 1-(9Z-octadecenoyl)-sn-glycero-3-phospho-(1'-sn-glycerol) + H2O = sn-glycero-3-phospho-(1'-sn-glycerol) + (9Z)-octadecenoate + H(+). The enzyme catalyses 1-(9Z-octadecenoyl)-sn-glycero-3-phospho-(1D-myo-inositol) + H2O = sn-glycero-3-phospho-1D-myo-inositol + (9Z)-octadecenoate + H(+). It carries out the reaction 1-(9Z-octadecenoyl)-sn-glycero-3-phosphoethanolamine + H2O = sn-glycero-3-phosphoethanolamine + (9Z)-octadecenoate + H(+). It catalyses the reaction 1-(9Z-octadecenoyl)-sn-glycero-3-phosphocholine + H2O = 1-(9Z-octadecenoyl)-sn-glycerol + phosphocholine + H(+). The catalysed reaction is 2-(9Z-octadecenoyl)-glycerol + H2O = glycerol + (9Z)-octadecenoate + H(+). The enzyme catalyses 1-hexadecanoyl-sn-glycero-3-phospho-L-serine + H2O = sn-glycero-3-phospho-L-serine + hexadecanoate + H(+). It carries out the reaction 2-(5Z,8Z,11Z,14Z-eicosatetraenoyl)-glycerol + H2O = glycerol + (5Z,8Z,11Z,14Z)-eicosatetraenoate + H(+). It catalyses the reaction Hydrolyzes glycerol monoesters of long-chain fatty acids.. The catalysed reaction is 1-decanoylglycerol + H2O = decanoate + glycerol + H(+). The enzyme catalyses 1-dodecanoylglycerol + H2O = dodecanoate + glycerol + H(+). It carries out the reaction 1-tetradecanoylglycerol + H2O = tetradecanoate + glycerol + H(+). It catalyses the reaction 2-hexadecanoylglycerol + H2O = glycerol + hexadecanoate + H(+). The catalysed reaction is 1-(9Z-octadecenoyl)-glycerol + H2O = glycerol + (9Z)-octadecenoate + H(+). The enzyme catalyses 2-(9Z,12Z-octadecadienoyl)-glycerol + H2O = (9Z,12Z)-octadecadienoate + glycerol + H(+). It carries out the reaction 1-(5Z,8Z,11Z,14Z-eicosatetraenoyl)-glycerol + H2O = glycerol + (5Z,8Z,11Z,14Z)-eicosatetraenoate + H(+). It catalyses the reaction 1-(9Z,12Z-octadecadienoyl)-glycerol + H2O = (9Z,12Z)-octadecadienoate + glycerol + H(+). The catalysed reaction is 1-hexadecanoylglycerol + H2O = glycerol + hexadecanoate + H(+). The enzyme catalyses 1-octadecanoylglycerol + H2O = octadecanoate + glycerol + H(+). It carries out the reaction 1-octadecanoyl-2-(9,10-epoxyoctadecanoyl)-sn-glycero-3-phospho-L-serine + H2O = 9,10-epoxyoctadecanoate + 1-octadecanoyl-sn-glycero-3-phosphoserine + H(+). It catalyses the reaction 1-octadecanoyl-2-(10-hydroxyoctadecanoyl)-sn-glycero-3-phospho-L-serine + H2O = 1-octadecanoyl-sn-glycero-3-phosphoserine + 10-hydroxyoctadecanoate + H(+). The catalysed reaction is 1-hexadecanoyl-2-(10-hydroxyoctadecanoyl)-sn-glycero-3-phospho-L-serine + H2O = 10-hydroxyoctadecanoate + 1-hexadecanoyl-sn-glycero-3-phospho-L-serine + H(+). Its function is as follows. Lysophosphatidylserine (LPS) lipase that mediates the hydrolysis of lysophosphatidylserine, a class of signaling lipids that regulates immunological and neurological processes. Represents a major lysophosphatidylserine lipase in the brain, thereby playing a key role in the central nervous system. Also able to hydrolyze oxidized phosphatidylserine; oxidized phosphatidylserine is produced in response to severe inflammatory stress and constitutes a proapoptotic 'eat me' signal. Also has monoacylglycerol (MAG) lipase activity: hydrolyzes 2-arachidonoylglycerol (2-AG), thereby acting as a regulator of endocannabinoid signaling pathways. Has a strong preference for very-long-chain lipid substrates; substrate specificity is likely due to improved catalysis and not improved substrate binding. This is Lysophosphatidylserine lipase ABHD12 from Macaca fascicularis (Crab-eating macaque).